Consider the following 225-residue polypeptide: PKHD-type hydroxylase YbiX (225 aa).

Positions 78 to 177 constitute a Fe2OG dioxygenase domain; sequence TLSTPLFNRY…RVASFMWIQS (100 aa). Residues H96, D98, and H158 each contribute to the Fe cation site. R168 is a 2-oxoglutarate binding site.

Requires Fe(2+) as cofactor. L-ascorbate is required as a cofactor.

The protein is PKHD-type hydroxylase YbiX of Escherichia coli O17:K52:H18 (strain UMN026 / ExPEC).